The sequence spans 315 residues: Peroxidase 4 (315 aa).

The signal sequence occupies residues 1-19 (MAIFKILVLLLSLCCFSQA). Gln-20 carries the post-translational modification Pyrrolidone carboxylic acid. 4 cysteine pairs are disulfide-bonded: Cys-30/Cys-110, Cys-63/Cys-68, Cys-116/Cys-311, and Cys-195/Cys-221. The active-site Proton acceptor is His-61. Ca(2+) contacts are provided by Asp-62, Val-65, Gly-67, Asp-69, and Ser-71. Residue Pro-158 participates in substrate binding. His-188 is a binding site for heme b. Ca(2+) is bound at residue Thr-189. Asn-205 is a glycosylation site (N-linked (GlcNAc...) asparagine). The Ca(2+) site is built by Asp-234, Thr-237, and Asp-242.

It belongs to the peroxidase family. Classical plant (class III) peroxidase subfamily. Requires heme b as cofactor. It depends on Ca(2+) as a cofactor.

It localises to the secreted. The enzyme catalyses 2 a phenolic donor + H2O2 = 2 a phenolic radical donor + 2 H2O. In terms of biological role, removal of H(2)O(2), oxidation of toxic reductants, biosynthesis and degradation of lignin, suberization, auxin catabolism, response to environmental stresses such as wounding, pathogen attack and oxidative stress. These functions might be dependent on each isozyme/isoform in each plant tissue. The sequence is that of Peroxidase 4 (PER4) from Arabidopsis thaliana (Mouse-ear cress).